The sequence spans 134 residues: MGSDTIADIITSIRNADMYRKSVVRVASTNISQSIVKILLREGFIENVRKHRENNKSFLVLTLRHRRNRKRTYRNLLNLKRISRPGLRIYSNYQRIPRILGGMGIVILSTSQGIMTDREARLERIGGEILCYIW.

It belongs to the universal ribosomal protein uS8 family. As to quaternary structure, part of the 30S ribosomal subunit.

It is found in the plastid. The protein resides in the chloroplast. Its function is as follows. One of the primary rRNA binding proteins, it binds directly to 16S rRNA central domain where it helps coordinate assembly of the platform of the 30S subunit. The sequence is that of Small ribosomal subunit protein uS8c (rps8) from Lactuca sativa (Garden lettuce).